The sequence spans 465 residues: MFIYDTKSKQKVPFEPLVKNKANIYVCGPTVYDDAHLGHARSAIAFDLLRRTLELSGYEVMLVRNFTDIDDKIINKALKENKSIQELSSIYIESYTRDLNALNVKKPSLEPKASEYLDAMVHMIETLLEKNIAYRVSNGDIYLDTSKDKDYGSLSVHNSSIEFGRIGLVQEKRLEQDFVLWKSYKGDNDVGFDSPLGKGRPGWHIECSSMVFETLALANTPYQIDIHAGGSDLLFPHHENEACQTRCAFGVELAKYWMHNGFVNINNEKMSKSLGNSFFVKDALKNYDGEILRNYLLGVHYRSVLNFNEEDLLVSKKRLDKIYRLKQRVLGTLGGINPNFKKEILECMQDDLNVSKALSVLENMLSSTNEKLDQNPKNKALKGEILANLKFVEELLGIGFKDPSAYFQLGVSESEKQEIENKIEERKRAKEQKDFLKADRIREELLNRKIALMDTPQGTIWEKFF.

Cys27 lines the Zn(2+) pocket. A 'HIGH' region motif is present at residues 29–39; the sequence is PTVYDDAHLGH. Cys207, His237, and Glu241 together coordinate Zn(2+). The 'KMSKS' region motif lies at 269 to 273; that stretch reads KMSKS. ATP is bound at residue Lys272.

This sequence belongs to the class-I aminoacyl-tRNA synthetase family. In terms of assembly, monomer. Zn(2+) is required as a cofactor.

It localises to the cytoplasm. It catalyses the reaction tRNA(Cys) + L-cysteine + ATP = L-cysteinyl-tRNA(Cys) + AMP + diphosphate. The protein is Cysteine--tRNA ligase of Helicobacter pylori (strain HPAG1).